Here is a 216-residue protein sequence, read N- to C-terminus: Penicillin-binding protein activator LpoB (216 aa).

Positions 1–20 (MIKNLSRYALVTAFALFLSG) are cleaved as a signal peptide. The N-palmitoyl cysteine moiety is linked to residue Cys21. Residue Cys21 is the site of S-diacylglycerol cysteine attachment. Positions 28 to 77 (QPAPVDEAKPGTEQPAQPTQPVPTVPSVPTVPAQPGPIEHPDQTSQPAPR) are disordered.

This sequence belongs to the LpoB family. As to quaternary structure, interacts with PBP1b.

Its subcellular location is the cell outer membrane. Regulator of peptidoglycan synthesis that is essential for the function of penicillin-binding protein 1B (PBP1b). The sequence is that of Penicillin-binding protein activator LpoB from Enterobacter sp. (strain 638).